The sequence spans 138 residues: MNTIHVDVVSAEESIFSGEARFVALPGEAGELGIYPRHTPLITRIKPGAVRIEKEDGTEEFVFVAGGLLEVQPNCVTVLSDTAIRGKDLDETKASEAKAAAEEALKNARSDIDIAMAQSELTVMAAQIAALRKYRQKK.

The protein belongs to the ATPase epsilon chain family. F-type ATPases have 2 components, CF(1) - the catalytic core - and CF(0) - the membrane proton channel. CF(1) has five subunits: alpha(3), beta(3), gamma(1), delta(1), epsilon(1). CF(0) has three main subunits: a, b and c.

Its subcellular location is the cell inner membrane. Its function is as follows. Produces ATP from ADP in the presence of a proton gradient across the membrane. This chain is ATP synthase epsilon chain, found in Polaromonas sp. (strain JS666 / ATCC BAA-500).